A 317-amino-acid chain; its full sequence is Beta-ketoacyl-[acyl-carrier-protein] synthase III (317 aa).

Residues Cys-112 and His-244 contribute to the active site. Residues 245–249 (QANLR) form an ACP-binding region. Asn-274 is a catalytic residue.

Belongs to the thiolase-like superfamily. FabH family. As to quaternary structure, homodimer.

It localises to the cytoplasm. It carries out the reaction malonyl-[ACP] + acetyl-CoA + H(+) = 3-oxobutanoyl-[ACP] + CO2 + CoA. It functions in the pathway lipid metabolism; fatty acid biosynthesis. In terms of biological role, catalyzes the condensation reaction of fatty acid synthesis by the addition to an acyl acceptor of two carbons from malonyl-ACP. Catalyzes the first condensation reaction which initiates fatty acid synthesis and may therefore play a role in governing the total rate of fatty acid production. Possesses both acetoacetyl-ACP synthase and acetyl transacylase activities. Its substrate specificity determines the biosynthesis of branched-chain and/or straight-chain of fatty acids. The protein is Beta-ketoacyl-[acyl-carrier-protein] synthase III of Escherichia coli O9:H4 (strain HS).